The following is a 51-amino-acid chain: MARTNVKLCPPKRSKRPSNSRSKSTSHSNRRSLNSLRRTRTSRRSNNGKFT.

The disordered stretch occupies residues 1–51; the sequence is MARTNVKLCPPKRSKRPSNSRSKSTSHSNRRSLNSLRRTRTSRRSNNGKFT. A compositionally biased stretch (low complexity) spans 19 to 36; sequence NSRSKSTSHSNRRSLNSL.

This is an uncharacterized protein from Bdellovibrio bacteriovorus (Bacteriophage phiMH2K).